A 348-amino-acid polypeptide reads, in one-letter code: Heat-inducible transcription repressor HrcA (348 aa).

The protein belongs to the HrcA family.

In terms of biological role, negative regulator of class I heat shock genes (grpE-dnaK-dnaJ and groELS operons). Prevents heat-shock induction of these operons. The polypeptide is Heat-inducible transcription repressor HrcA (Lacticaseibacillus casei (strain BL23) (Lactobacillus casei)).